The chain runs to 130 residues: Large ribosomal subunit protein bL20 (130 aa).

It belongs to the bacterial ribosomal protein bL20 family.

Binds directly to 23S ribosomal RNA and is necessary for the in vitro assembly process of the 50S ribosomal subunit. It is not involved in the protein synthesizing functions of that subunit. This is Large ribosomal subunit protein bL20 from Salinispora tropica (strain ATCC BAA-916 / DSM 44818 / JCM 13857 / NBRC 105044 / CNB-440).